We begin with the raw amino-acid sequence, 192 residues long: Peptidyl-tRNA hydrolase (192 aa).

Tyr14 lines the tRNA pocket. Residue His19 is the Proton acceptor of the active site. TRNA contacts are provided by Tyr64, Asn66, and Asn112.

Belongs to the PTH family. In terms of assembly, monomer.

The protein localises to the cytoplasm. It carries out the reaction an N-acyl-L-alpha-aminoacyl-tRNA + H2O = an N-acyl-L-amino acid + a tRNA + H(+). Its function is as follows. Hydrolyzes ribosome-free peptidyl-tRNAs (with 1 or more amino acids incorporated), which drop off the ribosome during protein synthesis, or as a result of ribosome stalling. In terms of biological role, catalyzes the release of premature peptidyl moieties from peptidyl-tRNA molecules trapped in stalled 50S ribosomal subunits, and thus maintains levels of free tRNAs and 50S ribosomes. This is Peptidyl-tRNA hydrolase from Anaeromyxobacter dehalogenans (strain 2CP-C).